A 446-amino-acid chain; its full sequence is Histidine--tRNA ligase (446 aa).

It belongs to the class-II aminoacyl-tRNA synthetase family. In terms of assembly, homodimer.

Its subcellular location is the cytoplasm. The catalysed reaction is tRNA(His) + L-histidine + ATP = L-histidyl-tRNA(His) + AMP + diphosphate + H(+). The chain is Histidine--tRNA ligase from Paraburkholderia xenovorans (strain LB400).